The following is a 508-amino-acid chain: Photosystem II CP47 reaction center protein (508 aa).

A run of 6 helical transmembrane segments spans residues 21 to 36 (AVHLMHTALVSGWAGS), 101 to 115 (IVLSGLLFLAAIWHW), 140 to 156 (GIHLFLSGVLCFAFGAF), 203 to 218 (IAAGILGILAGLFHLS), 237 to 252 (VLSSSIAAVFFAAFVV), and 457 to 472 (TFALLFFFGHIWHGAR).

The protein belongs to the PsbB/PsbC family. PsbB subfamily. PSII is composed of 1 copy each of membrane proteins PsbA, PsbB, PsbC, PsbD, PsbE, PsbF, PsbH, PsbI, PsbJ, PsbK, PsbL, PsbM, PsbT, PsbX, PsbY, PsbZ, Psb30/Ycf12, at least 3 peripheral proteins of the oxygen-evolving complex and a large number of cofactors. It forms dimeric complexes. The cofactor is Binds multiple chlorophylls. PSII binds additional chlorophylls, carotenoids and specific lipids..

Its subcellular location is the plastid. It is found in the chloroplast thylakoid membrane. In terms of biological role, one of the components of the core complex of photosystem II (PSII). It binds chlorophyll and helps catalyze the primary light-induced photochemical processes of PSII. PSII is a light-driven water:plastoquinone oxidoreductase, using light energy to abstract electrons from H(2)O, generating O(2) and a proton gradient subsequently used for ATP formation. The polypeptide is Photosystem II CP47 reaction center protein (Marchantia polymorpha (Common liverwort)).